Consider the following 359-residue polypeptide: MATH domain and coiled-coil domain-containing protein At2g42475 (359 aa).

The region spanning 6–128 (KTSFTFEIEN…NDKLIITVEV (123 aa)) is the MATH domain. The stretch at 146–337 (EFKELQDLYN…NLELMVLDFK (192 aa)) forms a coiled coil.

The protein is MATH domain and coiled-coil domain-containing protein At2g42475 of Arabidopsis thaliana (Mouse-ear cress).